The sequence spans 240 residues: PF03932 family protein CutC (240 aa).

Belongs to the CutC family.

It localises to the cytoplasm. This chain is PF03932 family protein CutC, found in Xanthomonas axonopodis pv. citri (strain 306).